An 890-amino-acid chain; its full sequence is DNA mismatch repair protein MutS (890 aa).

607–614 (GPNMSGKS) contacts ATP.

This sequence belongs to the DNA mismatch repair MutS family.

This protein is involved in the repair of mismatches in DNA. It is possible that it carries out the mismatch recognition step. This protein has a weak ATPase activity. This Bacillus mycoides (strain KBAB4) (Bacillus weihenstephanensis) protein is DNA mismatch repair protein MutS.